The primary structure comprises 320 residues: Lipoyl synthase (320 aa).

[4Fe-4S] cluster is bound by residues Cys-67, Cys-72, Cys-78, Cys-93, Cys-97, Cys-100, and Ser-307. One can recognise a Radical SAM core domain in the interval 79 to 296; that stretch reads FNHGTATFMI…RDKAQAMGFE (218 aa).

The protein belongs to the radical SAM superfamily. Lipoyl synthase family. [4Fe-4S] cluster is required as a cofactor.

The protein localises to the cytoplasm. The enzyme catalyses [[Fe-S] cluster scaffold protein carrying a second [4Fe-4S](2+) cluster] + N(6)-octanoyl-L-lysyl-[protein] + 2 oxidized [2Fe-2S]-[ferredoxin] + 2 S-adenosyl-L-methionine + 4 H(+) = [[Fe-S] cluster scaffold protein] + N(6)-[(R)-dihydrolipoyl]-L-lysyl-[protein] + 4 Fe(3+) + 2 hydrogen sulfide + 2 5'-deoxyadenosine + 2 L-methionine + 2 reduced [2Fe-2S]-[ferredoxin]. It participates in protein modification; protein lipoylation via endogenous pathway; protein N(6)-(lipoyl)lysine from octanoyl-[acyl-carrier-protein]: step 2/2. Catalyzes the radical-mediated insertion of two sulfur atoms into the C-6 and C-8 positions of the octanoyl moiety bound to the lipoyl domains of lipoate-dependent enzymes, thereby converting the octanoylated domains into lipoylated derivatives. This is Lipoyl synthase from Pasteurella multocida (strain Pm70).